The following is a 752-amino-acid chain: Myb-related protein A (752 aa).

The tract at residues 1–22 (MAKRSRSEDEDDDLQYADHDYE) is disordered. HTH myb-type domains lie at 30 to 81 (KKLW…QKVL), 82 to 137 (NPEL…NPEV), and 138 to 188 (KKSS…RRKV). 3 consecutive DNA-binding regions (H-T-H motif) follow at residues 58–81 (WTLI…QKVL), 110–133 (WSLI…HNHL), and 161–184 (WAEI…NSTM). Residue lysine 199 forms a Glycyl lysine isopeptide (Lys-Gly) (interchain with G-Cter in SUMO2) linkage. The tract at residues 230 to 295 (IPGYQYVSPE…RIPSQPGSFS (66 aa)) is transcriptional activation domain. The interval 298-553 (SGSFLMDDNM…IRRSILGTTP (256 aa)) is negative regulatory domain. Lysine 394 carries the N6-acetyllysine modification. Positions 451–480 (RKMRVGHSPGSELRDGSLNDGGNMALKHTP) are disordered. Glycyl lysine isopeptide (Lys-Gly) (interchain with G-Cter in SUMO2) cross-links involve residues lysine 592 and lysine 602.

In terms of assembly, component of the DREAM complex (also named LINC complex) at least composed of E2F4, E2F5, LIN9, LIN37, LIN52, LIN54, MYBL1, MYBL2, RBL1, RBL2, RBBP4, TFDP1 and TFDP2. The complex exists in quiescent cells where it represses cell cycle-dependent genes. It dissociates in S phase when LIN9, LIN37, LIN52 and LIN54 form a subcomplex that binds to MYBL2. Expressed in a variety of lymphoid and solid tumor lines cultured in vitro.

Its subcellular location is the nucleus. Transcription factor that specifically recognizes the sequence 5'-YAAC[GT]G-3'. Acts as a master regulator of male meiosis by promoting expression of piRNAs: activates expression of both piRNA precursor RNAs and expression of protein-coding genes involved in piRNA metabolism. The piRNA metabolic process mediates the repression of transposable elements during meiosis by forming complexes composed of piRNAs and Piwi proteins and governs the methylation and subsequent repression of transposons, which is essential for the germline integrity. Transcriptional activator of SOX30. This is Myb-related protein A (MYBL1) from Homo sapiens (Human).